The sequence spans 350 residues: uncharacterized protein (350 aa).

This is an uncharacterized protein from Methanocaldococcus jannaschii (strain ATCC 43067 / DSM 2661 / JAL-1 / JCM 10045 / NBRC 100440) (Methanococcus jannaschii).